Here is a 498-residue protein sequence, read N- to C-terminus: ATP synthase subunit beta, chloroplastic (498 aa).

172–179 (GGAGVGKT) serves as a coordination point for ATP.

Belongs to the ATPase alpha/beta chains family. F-type ATPases have 2 components, CF(1) - the catalytic core - and CF(0) - the membrane proton channel. CF(1) has five subunits: alpha(3), beta(3), gamma(1), delta(1), epsilon(1). CF(0) has four main subunits: a(1), b(1), b'(1) and c(9-12).

It localises to the plastid. The protein resides in the chloroplast thylakoid membrane. The enzyme catalyses ATP + H2O + 4 H(+)(in) = ADP + phosphate + 5 H(+)(out). In terms of biological role, produces ATP from ADP in the presence of a proton gradient across the membrane. The catalytic sites are hosted primarily by the beta subunits. The chain is ATP synthase subunit beta, chloroplastic from Populus tremuloides (Quaking aspen).